Reading from the N-terminus, the 752-residue chain is Protein WEAK CHLOROPLAST MOVEMENT UNDER BLUE LIGHT-like 2 (752 aa).

Serine 143 is modified (phosphoserine). 2 coiled-coil regions span residues 186–557 (ERRK…SRAS) and 596–651 (ELSK…KEAM). The tract at residues 476–495 (KHDLSETRQRNREDTREEKC) is disordered. Over residues 653 to 675 (KVEKARDGKVGMDHELRKWRSDN) the composition is skewed to basic and acidic residues. The tract at residues 653–733 (KVEKARDGKV…ETETKKKKKR (81 aa)) is disordered. A compositionally biased stretch (polar residues) spans 690–723 (KSKSALHQPTTFTFGEQASSSNVTPQASSSNVTP).

Belongs to the WEB family.

This is Protein WEAK CHLOROPLAST MOVEMENT UNDER BLUE LIGHT-like 2 (WEL2) from Arabidopsis thaliana (Mouse-ear cress).